The sequence spans 33 residues: Protein YdgV (33 aa).

The sequence is that of Protein YdgV from Escherichia coli (strain K12).